The following is a 1169-amino-acid chain: Integrin alpha-X (1169 aa).

Residues 1–19 form the signal peptide; the sequence is MSCTWIAFLLLLGFVSCLG. The Extracellular portion of the chain corresponds to 20–1116; it reads FNLDAEKLTH…EMYKVHNPVP (1097 aa). 2 FG-GAP repeats span residues 23–78 and 79–138; these read DAEK…NCEP and ISLQ…QSQN. A disulfide bridge links C69 with C76. N-linked (GlcNAc...) asparagine glycosylation is present at N89. Intrachain disulfides connect C108–C126 and C116–C146. The region spanning 152 to 330 is the VWFA domain; that stretch reads DIVFLIDGSG…DALKDIENQL (179 aa). 4 residues coordinate Mg(2+): D158, S160, S162, and D260. N267 is a glycosylation site (N-linked (GlcNAc...) asparagine). FG-GAP repeat units lie at residues 341-392, 393-444, 445-505, 508-566, and 571-631; these read ETPS…PTFI, NMSQ…SRHW, RPKS…GSRW, GTTL…QDIA, and QRIS…FTPA. A glycan (N-linked (GlcNAc...) asparagine) is linked at N393. D467, D469, D471, and D475 together coordinate Ca(2+). C496 and C507 form a disulfide bridge. Positions 531, 533, 535, 539, 594, 598, and 602 each coordinate Ca(2+). Disulfide bonds link C640/C721 and C656/C711. A glycan (N-linked (GlcNAc...) asparagine) is linked at N734. Intrachain disulfides connect C770–C776 and C858–C873. N-linked (GlcNAc...) asparagine glycosylation occurs at N949. 2 disulfides stabilise this stretch: C1007–C1031 and C1036–C1041. N1059 and N1084 each carry an N-linked (GlcNAc...) asparagine glycan. A helical membrane pass occupies residues 1117-1137; that stretch reads LIVGSSVGGLLLLAIITAILY. Topologically, residues 1138 to 1169 are cytoplasmic; it reads KAGFFKRQYKEMLEEANGQFVSDGTPTPQVAQ. The GFFKR motif motif lies at 1140–1144; that stretch reads GFFKR.

The protein belongs to the integrin alpha chain family. As to quaternary structure, heterodimer of an alpha and a beta subunit. Alpha-X associates with beta-2.

Its subcellular location is the membrane. Its function is as follows. Integrin alpha-X/beta-2 is a receptor for fibrinogen. It recognizes the sequence G-P-R in fibrinogen. It mediates cell-cell interaction during inflammatory responses. It is especially important in monocyte adhesion and chemotaxis. The sequence is that of Integrin alpha-X (Itgax) from Mus musculus (Mouse).